A 233-amino-acid polypeptide reads, in one-letter code: tRNA (guanine-N(7)-)-methyltransferase (233 aa).

Positions 62, 87, 116, and 138 each coordinate S-adenosyl-L-methionine. The active site involves Asp138. Substrate is bound by residues Lys142, Asp174, and 212-215 (TRYE).

It belongs to the class I-like SAM-binding methyltransferase superfamily. TrmB family.

It catalyses the reaction guanosine(46) in tRNA + S-adenosyl-L-methionine = N(7)-methylguanosine(46) in tRNA + S-adenosyl-L-homocysteine. The protein operates within tRNA modification; N(7)-methylguanine-tRNA biosynthesis. Its function is as follows. Catalyzes the formation of N(7)-methylguanine at position 46 (m7G46) in tRNA. This chain is tRNA (guanine-N(7)-)-methyltransferase, found in Bartonella henselae (strain ATCC 49882 / DSM 28221 / CCUG 30454 / Houston 1) (Rochalimaea henselae).